The chain runs to 72 residues: Translational regulator CsrA (72 aa).

This sequence belongs to the CsrA/RsmA family. Homodimer; the beta-strands of each monomer intercalate to form a hydrophobic core, while the alpha-helices form wings that extend away from the core.

The protein resides in the cytoplasm. Its function is as follows. A translational regulator that binds mRNA to regulate translation initiation and/or mRNA stability. Usually binds in the 5'-UTR at or near the Shine-Dalgarno sequence preventing ribosome-binding, thus repressing translation. Its main target seems to be the major flagellin gene, while its function is anatagonized by FliW. This chain is Translational regulator CsrA, found in Ruminiclostridium cellulolyticum (strain ATCC 35319 / DSM 5812 / JCM 6584 / H10) (Clostridium cellulolyticum).